Consider the following 717-residue polypeptide: Polyribonucleotide nucleotidyltransferase (717 aa).

Residues aspartate 486 and aspartate 492 each coordinate Mg(2+). A KH domain is found at 553 to 612; sequence PRMITVKINPEKIRDVIGKGGSTIQALTKETGCTIDIQEDGTITIASTSSEGMAEAKRRI. Residues 622–690 enclose the S1 motif domain; sequence GKIYSGTVLK…EKGRMRLSIK (69 aa). The disordered stretch occupies residues 690-717; that stretch reads KAAKAEEGDVPATAPQAPGAGDATSQQQ.

It belongs to the polyribonucleotide nucleotidyltransferase family. The cofactor is Mg(2+).

Its subcellular location is the cytoplasm. The enzyme catalyses RNA(n+1) + phosphate = RNA(n) + a ribonucleoside 5'-diphosphate. Functionally, involved in mRNA degradation. Catalyzes the phosphorolysis of single-stranded polyribonucleotides processively in the 3'- to 5'-direction. This Ralstonia nicotianae (strain ATCC BAA-1114 / GMI1000) (Ralstonia solanacearum) protein is Polyribonucleotide nucleotidyltransferase.